Consider the following 263-residue polypeptide: Proteasome subunit beta type-5 (263 aa).

Residues 1-59 (MALASVLERPLSVNRRGFFGLGGRADLLDLGPGSPSDGLSLAAPSWGVPEEPRIEILHG) constitute a propeptide, removed in mature form. Thr-60 (nucleophile) is an active-site residue. Ala-108 contacts bortezomib.

This sequence belongs to the peptidase T1B family. The 26S proteasome consists of a 20S proteasome core and two 19S regulatory subunits. The 20S proteasome core is a barrel-shaped complex made of 28 subunits that are arranged in four stacked rings. The two outer rings are each formed by seven alpha subunits, and the two inner rings are formed by seven beta subunits. The proteolytic activity is exerted by three beta-subunits PSMB5, PSMB6 and PSMB7. Directly interacts with POMP. Interacts with ABCB1 and TAP1.

The protein localises to the cytoplasm. It localises to the nucleus. The catalysed reaction is Cleavage of peptide bonds with very broad specificity.. In terms of biological role, component of the 20S core proteasome complex involved in the proteolytic degradation of most intracellular proteins. This complex plays numerous essential roles within the cell by associating with different regulatory particles. Associated with two 19S regulatory particles, forms the 26S proteasome and thus participates in the ATP-dependent degradation of ubiquitinated proteins. The 26S proteasome plays a key role in the maintenance of protein homeostasis by removing misfolded or damaged proteins that could impair cellular functions, and by removing proteins whose functions are no longer required. Associated with the PA200 or PA28, the 20S proteasome mediates ubiquitin-independent protein degradation. This type of proteolysis is required in several pathways including spermatogenesis (20S-PA200 complex) or generation of a subset of MHC class I-presented antigenic peptides (20S-PA28 complex). Within the 20S core complex, PSMB5 displays a chymotrypsin-like activity. The sequence is that of Proteasome subunit beta type-5 from Bos taurus (Bovine).